Here is a 277-residue protein sequence, read N- to C-terminus: uncharacterized protein (277 aa).

The next 7 helical transmembrane spans lie at 23–43 (CIGGLMSAIVGAMSGVTTAFI), 61–81 (FLIYFGIIFIIGLIVSAIIGG), 117–137 (LVLLNIIFYFIPAILFVFGIF), 144–164 (IIGAFLIIISILIFIISVISL), 197–217 (YIILVIIIAIINFIISLIVVL), 221–241 (IIDIFISYSALANSILTIIYI), and 243–263 (IKGISYALSTFVDFYLGVFSI).

This sequence to M.jannaschii MJ1189.

Its subcellular location is the cell membrane. This is an uncharacterized protein from Methanocaldococcus jannaschii (strain ATCC 43067 / DSM 2661 / JAL-1 / JCM 10045 / NBRC 100440) (Methanococcus jannaschii).